Here is a 187-residue protein sequence, read N- to C-terminus: UPF0301 protein VV2869 (187 aa).

The protein belongs to the UPF0301 (AlgH) family.

This is UPF0301 protein VV2869 from Vibrio vulnificus (strain YJ016).